The following is a 121-amino-acid chain: MPDLNKIIEDLSSLTVVEAAELSKQLEEKWGVTAMAAAAPAAAAGGAAEEAKDDFTIMLISAGDKKINVIKEVRAATSLGLKEAKDLVEGAPKEVKSGVNKKDAEEIKAKLEAAGAKVELK.

This sequence belongs to the bacterial ribosomal protein bL12 family. As to quaternary structure, homodimer. Part of the ribosomal stalk of the 50S ribosomal subunit. Forms a multimeric L10(L12)X complex, where L10 forms an elongated spine to which 2 to 4 L12 dimers bind in a sequential fashion. Binds GTP-bound translation factors.

Functionally, forms part of the ribosomal stalk which helps the ribosome interact with GTP-bound translation factors. Is thus essential for accurate translation. This is Large ribosomal subunit protein bL12 from Pelagibacter ubique (strain HTCC1062).